The following is a 343-amino-acid chain: Methionine import ATP-binding protein MetN (343 aa).

One can recognise an ABC transporter domain in the interval 2-241 (IKLSNITKVF…PKTPLAQKFI (240 aa)). 40–46 (SGAGKST) contributes to the ATP binding site. Residues 265-343 (CVPMLRLEFT…HVKVEVLGYV (79 aa)) are C2 domain. L-methionine contacts are provided by residues 278 to 283 (VDAPLL) and 295 to 296 (NI).

It belongs to the ABC transporter superfamily. Methionine importer (TC 3.A.1.24) family. The complex is composed of two ATP-binding proteins (MetN), two transmembrane proteins (MetI) and a solute-binding protein (MetQ).

The protein localises to the cell inner membrane. It carries out the reaction L-methionine(out) + ATP + H2O = L-methionine(in) + ADP + phosphate + H(+). The enzyme catalyses D-methionine(out) + ATP + H2O = D-methionine(in) + ADP + phosphate + H(+). With respect to regulation, ATPase activity is inhibited by intracellular L-methionine. Binding of methionine to the dimerized C-terminal regulatory domain stabilizes an inward-facing, ATPase-inactive conformation of the transporter, and as a consequence, the rate of ATP hydrolysis decreases. ADP is a competitive inhibitor. Part of the ABC transporter complex MetNIQ involved in methionine import. Responsible for energy coupling to the transport system. It has also been shown to be involved in formyl-L-methionine transport. The protein is Methionine import ATP-binding protein MetN of Escherichia coli (strain K12).